Reading from the N-terminus, the 83-residue chain is Hainantoxin-III (83 aa).

A signal peptide spans 1–21; it reads MKASMFLALAGLVLLFVVGYA. The propeptide occupies 22 to 48; that stretch reads SESEEKEFPRELLSKIFALDDFKGEER. Intrachain disulfides connect Cys50–Cys65, Cys57–Cys70, and Cys64–Cys77. Leu81 bears the Leucine amide mark.

This sequence belongs to the neurotoxin 10 (Hwtx-1) family. 15 (Hntx-3) subfamily. As to quaternary structure, monomer. In terms of tissue distribution, expressed by the venom gland.

The protein resides in the secreted. Selective antagonist of neuronal tetrodotoxin (TTX)-sensitive voltage-gated sodium channels (IC(50)=1270 nM on Nav1.1/SCN1A, 270 nM on Nav1.2/SCN2A, 491 nM on Nav1.3/SCN3A and 232 nM on Nav1.7/SCN9A). This toxin suppress Nav1.7 current amplitude without significantly altering the activation, inactivation, and repriming kinetics. Short extreme depolarizations partially activate the toxin-bound channel, indicating voltage-dependent inhibition of this toxin. This toxin increases the deactivation of the Nav1.7 current after extreme depolarizations. The toxin-Nav1.7 complex is gradually dissociated upon prolonged strong depolarizations in a voltage-dependent manner, and the unbound toxin rebinds to Nav1.7 after a long repolarization. Moreover, analysis of chimeric channels showed that the DIIS3-S4 linker is critical for toxin binding to Nav1.7. These data are consistent with this toxin interacting with Nav1.7 site 4 and trapping the domain II voltage sensor in the closed state. In Cyriopagopus hainanus (Chinese bird spider), this protein is Hainantoxin-III.